The sequence spans 337 residues: Formamidase (337 aa).

The region spanning 14-257 (VVIGLVQLQL…DEIITAEVRP (244 aa)) is the CN hydrolase domain. Glutamate 60 serves as the catalytic Proton acceptor. The Proton donor role is filled by lysine 129. Cysteine 162 functions as the Nucleophile in the catalytic mechanism.

Belongs to the carbon-nitrogen hydrolase superfamily. Aliphatic amidase family.

The enzyme catalyses formamide + H2O = formate + NH4(+). Functionally, is an aliphatic amidase with a restricted substrate specificity, as it only hydrolyzes formamide. This chain is Formamidase, found in Bradyrhizobium diazoefficiens (strain JCM 10833 / BCRC 13528 / IAM 13628 / NBRC 14792 / USDA 110).